A 189-amino-acid chain; its full sequence is Elongation factor P (189 aa).

It belongs to the elongation factor P family.

It is found in the cytoplasm. It participates in protein biosynthesis; polypeptide chain elongation. Functionally, involved in peptide bond synthesis. Stimulates efficient translation and peptide-bond synthesis on native or reconstituted 70S ribosomes in vitro. Probably functions indirectly by altering the affinity of the ribosome for aminoacyl-tRNA, thus increasing their reactivity as acceptors for peptidyl transferase. In Pseudomonas putida (strain GB-1), this protein is Elongation factor P.